Reading from the N-terminus, the 37-residue chain is Photosystem I reaction center subunit VIII (37 aa).

Residues 7-27 (LPSFFVPLVGLVFPAIAMASL) form a helical membrane-spanning segment.

This sequence belongs to the PsaI family.

It localises to the plastid. Its subcellular location is the chloroplast thylakoid membrane. May help in the organization of the PsaL subunit. The protein is Photosystem I reaction center subunit VIII of Eucalyptus globulus subsp. globulus (Tasmanian blue gum).